A 340-amino-acid polypeptide reads, in one-letter code: tRNA N6-adenosine threonylcarbamoyltransferase (340 aa).

Fe cation is bound by residues H115 and H119. Substrate is bound by residues 138-142 (VVSGG), D171, G184, D188, and N278. D306 is a Fe cation binding site.

The protein belongs to the KAE1 / TsaD family. Requires Fe(2+) as cofactor.

It localises to the cytoplasm. It carries out the reaction L-threonylcarbamoyladenylate + adenosine(37) in tRNA = N(6)-L-threonylcarbamoyladenosine(37) in tRNA + AMP + H(+). Functionally, required for the formation of a threonylcarbamoyl group on adenosine at position 37 (t(6)A37) in tRNAs that read codons beginning with adenine. Is involved in the transfer of the threonylcarbamoyl moiety of threonylcarbamoyl-AMP (TC-AMP) to the N6 group of A37, together with TsaE and TsaB. TsaD likely plays a direct catalytic role in this reaction. This chain is tRNA N6-adenosine threonylcarbamoyltransferase, found in Clostridium botulinum (strain 657 / Type Ba4).